The chain runs to 157 residues: MVYPVRNKDDLDQQLILAEDKLVVIDFYADWCGPCKIIAPKLDELAHEYSDRVVVLKVNVDENEDITVEYNVNSMPTFVFIKGGNVLELFVGCNSDKLAKLMEKHAGVYTDEAADVKAVHIDGECIVDLTAESSESDNDNNNVNEVSAHDENAVLEH.

In terms of domain architecture, Thioredoxin spans 2–107 (VYPVRNKDDL…LAKLMEKHAG (106 aa)). An intrachain disulfide couples C32 to C35. The disordered stretch occupies residues 132–157 (ESSESDNDNNNVNEVSAHDENAVLEH). A compositionally biased stretch (basic and acidic residues) spans 147–157 (SAHDENAVLEH).

It belongs to the thioredoxin family. As to expression, testis specific. Not expressed in the embryo. Becomes progressively more strongly expressed during larval and pupal development. In testis, it is strongly expressed in young spermatocytes, and postmeiotic spermatid stages, then expression decreases at the nuclear elongation stage. Strongly expressed in the waste bag, in which material no longer needed for the mature sperm is eliminated. Not expressed in the stem cells and spermatogonial cells.

Its subcellular location is the nucleus. The protein localises to the chromosome. In terms of biological role, probably participates in various redox reactions through the reversible oxidation of its active center dithiol to a disulfide and catalyzes dithiol-disulfide exchange reactions. Its tissue specificity suggests a regulatory role in the germline. The sequence is that of Thioredoxin-T (TrxT) from Drosophila melanogaster (Fruit fly).